Consider the following 229-residue polypeptide: DNA repair protein RecO (229 aa).

The protein belongs to the RecO family.

Its function is as follows. Involved in DNA repair and RecF pathway recombination. This is DNA repair protein RecO from Legionella pneumophila (strain Paris).